Here is a 286-residue protein sequence, read N- to C-terminus: Phosphoribosylaminoimidazole-succinocarboxamide synthase (286 aa).

It belongs to the SAICAR synthetase family.

It catalyses the reaction 5-amino-1-(5-phospho-D-ribosyl)imidazole-4-carboxylate + L-aspartate + ATP = (2S)-2-[5-amino-1-(5-phospho-beta-D-ribosyl)imidazole-4-carboxamido]succinate + ADP + phosphate + 2 H(+). It functions in the pathway purine metabolism; IMP biosynthesis via de novo pathway; 5-amino-1-(5-phospho-D-ribosyl)imidazole-4-carboxamide from 5-amino-1-(5-phospho-D-ribosyl)imidazole-4-carboxylate: step 1/2. The sequence is that of Phosphoribosylaminoimidazole-succinocarboxamide synthase from Mannheimia succiniciproducens (strain KCTC 0769BP / MBEL55E).